Reading from the N-terminus, the 189-residue chain is Potassium-transporting ATPase KdpC subunit (189 aa).

The chain crosses the membrane as a helical span at residues 8 to 28 (LVMLILLTLITGIAYPLLTTG).

Belongs to the KdpC family. In terms of assembly, the system is composed of three essential subunits: KdpA, KdpB and KdpC.

The protein resides in the cell inner membrane. Part of the high-affinity ATP-driven potassium transport (or Kdp) system, which catalyzes the hydrolysis of ATP coupled with the electrogenic transport of potassium into the cytoplasm. This subunit acts as a catalytic chaperone that increases the ATP-binding affinity of the ATP-hydrolyzing subunit KdpB by the formation of a transient KdpB/KdpC/ATP ternary complex. The protein is Potassium-transporting ATPase KdpC subunit of Serratia proteamaculans (strain 568).